The primary structure comprises 106 residues: Protein aveugle (106 aa).

Positions 26–91 (WTVSDVLKWY…WREIVKQRLK (66 aa)) constitute an SAM domain.

In terms of assembly, interacts with the SAM domain of cnk.

The protein localises to the cytoplasm. It localises to the membrane. Its function is as follows. Required for normal photoreceptor differentiation between Ras and Raf for EGFR signaling in the eye and for mitogen-activated protein kinase phosphorylation. Probably acts together with Cnk to promote Raf activation, perhaps by recruiting an activating kinase. In Drosophila melanogaster (Fruit fly), this protein is Protein aveugle (ave).